The chain runs to 148 residues: MSEQQPRVIESKEIMTLLPHRYPFLLVDRVLDFKEGEWLKAIKNISVNEPCFTGHFPGEPILPGVLILEALAQAMGILAFKTLELKGGELFYFAGIDEARFKRPVLPGDQMELNVQVIKERRGITSFTGVATVNGEIACEAKLMCARR.

The active site involves histidine 55.

The protein belongs to the thioester dehydratase family. FabZ subfamily.

Its subcellular location is the cytoplasm. The catalysed reaction is a (3R)-hydroxyacyl-[ACP] = a (2E)-enoyl-[ACP] + H2O. Involved in unsaturated fatty acids biosynthesis. Catalyzes the dehydration of short chain beta-hydroxyacyl-ACPs and long chain saturated and unsaturated beta-hydroxyacyl-ACPs. This Haemophilus influenzae (strain 86-028NP) protein is 3-hydroxyacyl-[acyl-carrier-protein] dehydratase FabZ.